The following is a 112-amino-acid chain: 2Fe-2S ferredoxin (112 aa).

The 103-residue stretch at 5–107 folds into the 2Fe-2S ferredoxin-type domain; that stretch reads IKVTFIINDE…GIKVRLPSAT (103 aa). 4 residues coordinate [2Fe-2S] cluster: C42, C48, C51, and C88.

The protein belongs to the adrenodoxin/putidaredoxin family. Requires [2Fe-2S] cluster as cofactor.

Ferredoxin are iron-sulfur proteins that transfer electrons in a wide variety of metabolic reactions. In Rickettsia prowazekii (strain Madrid E), this protein is 2Fe-2S ferredoxin (fdxB).